The primary structure comprises 451 residues: MKAWNLDVQNATARVQLPEGLVVQDYYMSQGYYDLETGTWEIGDIPAYEERSLTFICLLNRTGSVTVNANVTADGDDNSANNNAELTFKVFGISDLEVNVTGNKETARIGDTVRITVKLKNRGPHDANNIKIGNFLSGGLVVQNFSYDAGYFDDITREWIFETLAAGEEATLTLDCLVNRTGELSDYVSVREVDEGDVNVYNNMAHASVAVKGTDLDLDLSVSKLRAYQGDVVNVVCRVRNNGPETAQNARVNLQLPGNLQVQHVQLDRGTYSNGVWVIGDLADNETALLNITARVMSAGNFTLNATAVSPAIDDSNPVNNDDTARISVAIPKKTLKVRIKNNSAVTIRVLLYVTVNDHGKITRKTYNFYLKKGLSRDLSLGYFQLGTTALFKQYTYNTNYRSRTVSYENTYNATSVITQRVNVSGVKGRQKAPVVRIATLLLDENGTSLQ.

It to ORF5 in pFZ1.

This is an uncharacterized protein from Methanothermobacter thermautotrophicus (Methanobacterium thermoformicicum).